Consider the following 392-residue polypeptide: NADH-quinone oxidoreductase subunit D (392 aa).

The protein belongs to the complex I 49 kDa subunit family. In terms of assembly, NDH-1 is composed of 14 different subunits. Subunits NuoB, C, D, E, F, and G constitute the peripheral sector of the complex.

The protein resides in the cell inner membrane. The enzyme catalyses a quinone + NADH + 5 H(+)(in) = a quinol + NAD(+) + 4 H(+)(out). NDH-1 shuttles electrons from NADH, via FMN and iron-sulfur (Fe-S) centers, to quinones in the respiratory chain. The immediate electron acceptor for the enzyme in this species is believed to be ubiquinone. Couples the redox reaction to proton translocation (for every two electrons transferred, four hydrogen ions are translocated across the cytoplasmic membrane), and thus conserves the redox energy in a proton gradient. This chain is NADH-quinone oxidoreductase subunit D, found in Rhodospirillum rubrum (strain ATCC 11170 / ATH 1.1.1 / DSM 467 / LMG 4362 / NCIMB 8255 / S1).